Consider the following 163-residue polypeptide: Shikimate kinase (163 aa).

An ATP-binding site is contributed by 10-15 (GVGKTT). Residue Thr-14 coordinates Mg(2+). 3 residues coordinate substrate: Asp-28, Arg-52, and Gly-75. An ATP-binding site is contributed by Arg-116. Arg-134 contacts substrate. Arg-151 is a binding site for ATP.

This sequence belongs to the shikimate kinase family. In terms of assembly, monomer. Requires Mg(2+) as cofactor.

It localises to the cytoplasm. It catalyses the reaction shikimate + ATP = 3-phosphoshikimate + ADP + H(+). Its pathway is metabolic intermediate biosynthesis; chorismate biosynthesis; chorismate from D-erythrose 4-phosphate and phosphoenolpyruvate: step 5/7. Functionally, catalyzes the specific phosphorylation of the 3-hydroxyl group of shikimic acid using ATP as a cosubstrate. This is Shikimate kinase from Streptococcus pyogenes serotype M49 (strain NZ131).